Consider the following 173-residue polypeptide: Crossover junction endodeoxyribonuclease RuvC (173 aa).

Active-site residues include Asp8, Glu67, and Asp139. 3 residues coordinate Mg(2+): Asp8, Glu67, and Asp139.

It belongs to the RuvC family. Homodimer which binds Holliday junction (HJ) DNA. The HJ becomes 2-fold symmetrical on binding to RuvC with unstacked arms; it has a different conformation from HJ DNA in complex with RuvA. In the full resolvosome a probable DNA-RuvA(4)-RuvB(12)-RuvC(2) complex forms which resolves the HJ. Mg(2+) is required as a cofactor.

The protein resides in the cytoplasm. The enzyme catalyses Endonucleolytic cleavage at a junction such as a reciprocal single-stranded crossover between two homologous DNA duplexes (Holliday junction).. In terms of biological role, the RuvA-RuvB-RuvC complex processes Holliday junction (HJ) DNA during genetic recombination and DNA repair. Endonuclease that resolves HJ intermediates. Cleaves cruciform DNA by making single-stranded nicks across the HJ at symmetrical positions within the homologous arms, yielding a 5'-phosphate and a 3'-hydroxyl group; requires a central core of homology in the junction. The consensus cleavage sequence is 5'-(A/T)TT(C/G)-3'. Cleavage occurs on the 3'-side of the TT dinucleotide at the point of strand exchange. HJ branch migration catalyzed by RuvA-RuvB allows RuvC to scan DNA until it finds its consensus sequence, where it cleaves and resolves the cruciform DNA. The polypeptide is Crossover junction endodeoxyribonuclease RuvC (Sodalis glossinidius (strain morsitans)).